The primary structure comprises 250 residues: Acetoacetate decarboxylase 1 (250 aa).

The active-site Schiff-base intermediate with acetoacetate is K120.

The protein belongs to the ADC family.

It carries out the reaction acetoacetate + H(+) = acetone + CO2. Catalyzes the conversion of acetoacetate to acetone and carbon dioxide. This chain is Acetoacetate decarboxylase 1, found in Bradyrhizobium diazoefficiens (strain JCM 10833 / BCRC 13528 / IAM 13628 / NBRC 14792 / USDA 110).